The sequence spans 356 residues: sn-glycerol-3-phosphate import ATP-binding protein UgpC (356 aa).

The ABC transporter domain occupies 4 to 235 (LKLQAVTKSW…PASLFVASFI (232 aa)). Residue 37-44 (GPSGCGKS) coordinates ATP.

This sequence belongs to the ABC transporter superfamily. sn-glycerol-3-phosphate importer (TC 3.A.1.1.3) family. As to quaternary structure, the complex is composed of two ATP-binding proteins (UgpC), two transmembrane proteins (UgpA and UgpE) and a solute-binding protein (UgpB).

Its subcellular location is the cell inner membrane. The enzyme catalyses sn-glycerol 3-phosphate(out) + ATP + H2O = sn-glycerol 3-phosphate(in) + ADP + phosphate + H(+). Part of the ABC transporter complex UgpBAEC involved in sn-glycerol-3-phosphate (G3P) import. Responsible for energy coupling to the transport system. In Escherichia coli O6:H1 (strain CFT073 / ATCC 700928 / UPEC), this protein is sn-glycerol-3-phosphate import ATP-binding protein UgpC.